Here is a 572-residue protein sequence, read N- to C-terminus: Vacuolar protein sorting-associated protein vps901 (572 aa).

2 stretches are compositionally biased toward basic and acidic residues: residues 1 to 31 (MDYP…EKPL) and 39 to 53 (DEQR…KNHD). The interval 1–108 (MDYPSFHEDP…HENNPGQQEI (108 aa)) is disordered. Over residues 69-80 (QYEQTDSSSDQE) the composition is skewed to polar residues. Basic and acidic residues predominate over residues 82-98 (MNEKQSLDKENRNDNIP). The 139-residue stretch at 219–357 (VEEDRVLSEK…IETLDCSSLT (139 aa)) folds into the VPS9 domain. Residues 430–502 (QIDTPESKEY…IVHEEQPVDD (73 aa)) form a disordered region. A compositionally biased stretch (polar residues) spans 445 to 457 (PRGSSHSGSFTTD). A CUE domain is found at 529–571 (REKAEAITALRAMFPAFDSEVIEVVLNAQQGRLSSSIDSLLEM).

In terms of biological role, required for vacuolar protein sorting; may be required for the consumption of transport vesicles containing vacuolar protein precursors. Required for vacuolar fusion. This chain is Vacuolar protein sorting-associated protein vps901 (vps901), found in Schizosaccharomyces pombe (strain 972 / ATCC 24843) (Fission yeast).